The chain runs to 427 residues: Gamma-glutamyl phosphate reductase (427 aa).

This sequence belongs to the gamma-glutamyl phosphate reductase family.

It is found in the cytoplasm. The enzyme catalyses L-glutamate 5-semialdehyde + phosphate + NADP(+) = L-glutamyl 5-phosphate + NADPH + H(+). It functions in the pathway amino-acid biosynthesis; L-proline biosynthesis; L-glutamate 5-semialdehyde from L-glutamate: step 2/2. In terms of biological role, catalyzes the NADPH-dependent reduction of L-glutamate 5-phosphate into L-glutamate 5-semialdehyde and phosphate. The product spontaneously undergoes cyclization to form 1-pyrroline-5-carboxylate. This chain is Gamma-glutamyl phosphate reductase, found in Rhizobium etli (strain ATCC 51251 / DSM 11541 / JCM 21823 / NBRC 15573 / CFN 42).